The following is a 1197-amino-acid chain: Envelopment polyprotein (1197 aa).

The N-terminal stretch at 1-16 is a signal peptide; the sequence is MYVLLTILTSVLVCEA. Topologically, residues 17 to 130 are cytoplasmic; the sequence is IIRVSLSSTR…RDAKQIGRKT (114 aa). Positions 131 to 153 are internal signal sequence for glycoprotein N; the sequence is MAGIAMTVLPALAVFALAPVVFA. Residues 154-582 lie on the Lumenal side of the membrane; it reads EDPHLRNRPG…GLINYQCHTA (429 aa). Intrachain disulfides connect Cys179-Cys188, Cys229-Cys239, Cys250-Cys281, Cys271-Cys284, Cys304-Cys456, Cys322-Cys332, Cys374-Cys434, Cys402-Cys413, Cys420-Cys425, Cys479-Cys482, Cys486-Cys556, and Cys506-Cys511. A helical transmembrane segment spans residues 583 to 603; sequence LSAFVVVFVFSSIAIICLAIL. At 604–673 the chain is on the cytoplasmic side; the sequence is YRVLKCLKIA…APIPRHAPIP (70 aa). A golgi retention signal region spans residues 608-650; the sequence is KCLKIAPRKVLNPLMWITAFIRWIYKKMVARVADNINQVNREI. Residues 646–650 form an important for correct targeting of the glycoproteins to the Golgi complex but not for heterodimerization region; the sequence is VNREI. An internal signal sequence for glycoprotein C region spans residues 675 to 690; the sequence is YSTYLMLLLIVSYASA. Intrachain disulfides connect Cys691–Cys731, Cys704–Cys713, Cys756–Cys852, Cys771–Cys965, Cys777–Cys825, Cys783–Cys832, Cys788–Cys814, Cys818–Cys823, Cys934–Cys947, Cys1029–Cys1101, Cys1039–Cys1042, and Cys1049–Cys1083. Over 691–1159 the chain is Lumenal; the sequence is CSELIQASSR…MSWFGGPLKT (469 aa). Positions 777 to 783 are fusion loop; sequence CHLVGEC. Asn794 carries N-linked (GlcNAc...) asparagine; by host glycosylation. Positions 819–830 are fusion loop; it reads GGWGCGCFNVNP. N-linked (GlcNAc...) asparagine; by host glycosylation is present at Asn1035. N-linked (GlcNAc...) asparagine; by host glycosylation is present at Asn1077. The chain crosses the membrane as a helical span at residues 1160–1180; the sequence is ILLICLYVALSIGLFFLLIYL. At 1181-1197 the chain is on the cytoplasmic side; that stretch reads GGTGLSKMWLAATKKAS.

The protein belongs to the phlebovirus envelope glycoprotein family. In terms of assembly, heterodimer with glycoprotein C. Homotrimer (postfusion). Interacts with nucleocapsid protein N and with the polymerase L in order to package them into virus particles. Interacts with host E3 ubiquitin-protein ligase UBR4; this interaction is important for viral RNA production. Interacts with host LRP1; this interaction facilitates virus entry into the host cell. As to quaternary structure, heterodimer with glycoprotein C. Post-translationally, specific enzymatic cleavages in vivo yield mature proteins including NSm protein, Glycoprotein C, and Glycoprotein N. In terms of processing, glycosylated. The glycans can attach to host CD209/DC-SIGN, and may play a role in virus entry into dendritic cells. Palmitoylated.

It is found in the virion membrane. The protein resides in the host Golgi apparatus membrane. Its subcellular location is the host endoplasmic reticulum membrane. It localises to the host mitochondrion outer membrane. The protein localises to the host Golgi apparatus. It is found in the virion. Functionally, structural component of the virion that interacts with glycoprotein C. It shields the hydrophobic fusion loops of the glycoprotein C, preventing premature fusion. The glycoprotein protrusions are arranged on an icosahedral lattice, with T=12 triangulation. They are able to attach the virion to the host cell receptor CD209/DC-SIGN and to promote fusion of membranes with the late endosome after endocytosis of the virion. Plays a role in the packaging of ribonucleoproteins and polymerase during virus assembly. Structural component of the virion that interacts with glycoprotein N. Acts as a class II fusion protein that is activated upon acidification and subsequent repositioning of the glycoprotein N. The glycoprotein protrusions are arranged on an icosahedral lattice, with T=12 triangulation. They are able to attach the virion to the host cell receptor CD209/DC-SIGN and to promote fusion of membranes with the late endosome after endocytosis of the virion. In terms of biological role, plays a role in the inhibition of virus-induced apoptosis. Plays a role for virus dissemination in vertebrates. Its function is as follows. Plays a role for virus dissemination in mosquitoes. May act as a structural virion protein in insects. This chain is Envelopment polyprotein (GP), found in Rift valley fever virus (strain ZH-548 M12) (RVFV).